The chain runs to 672 residues: Outer dynein arm-docking complex subunit 4 (672 aa).

8 TPR repeats span residues 13–46 (FPSY…QDGD), 48–80 (NCLV…DPAF), 81–114 (CKGI…RPDR), 275–311 (LKSL…NKEE), 320–353 (GNLY…AKEY), 360–393 (SRAL…AKTT), 397–430 (TWLF…AEEE), and 437–470 (LNAS…AKLV). Basic and acidic residues predominate over residues 527–544 (RVRDEPEKVVKQWDHSED). The segment at 527–672 (RVRDEPEKVV…TGNEMEKEYE (146 aa)) is disordered. Residues 545 to 555 (EKETDEDDEAF) are compositionally biased toward acidic residues. Basic and acidic residues-rich tracts occupy residues 595-650 (ETGR…EELG) and 658-672 (GETK…KEYE).

As to quaternary structure, component of the outer dynein arm-docking complex along with ODAD1, ODAD2 and ODAD3. Interacts with ODAD1; this interaction may facilitate the recruitment and/or attachment of outer dynein arm docking complex proteins, including ODAD1, ODAD3 and ODAD2, to ciliary axonemes. Interacts with components of the IFT complex A, including IFT140, TTC21B/IFT139 and WDR19/IFT144, and the IFT complex B, including IFT46, IFT52 and IFT57. Interacts with CFAP53. As to expression, expressed in the nasal mucosa (at protein level).

Its subcellular location is the cytoplasm. The protein localises to the cytoskeleton. The protein resides in the cilium axoneme. In terms of biological role, component of the outer dynein arm-docking complex (ODA-DC) that mediates outer dynein arms (ODA) binding onto the doublet microtubule. Plays an essential role for the assembly of ODA-DC and for the docking of ODA in ciliary axoneme. This chain is Outer dynein arm-docking complex subunit 4, found in Homo sapiens (Human).